Reading from the N-terminus, the 228-residue chain is Cytochrome c oxidase subunit 2 (228 aa).

Residues 1–26 (MATWANLGLQDSSSPLMEQLNFFHDH) lie on the Mitochondrial intermembrane side of the membrane. The chain crosses the membrane as a helical span at residues 27–48 (TLLILTMITILVGYIMGMLSFN). Residues 49–62 (KFTNRFLLHGQTIE) are Mitochondrial matrix-facing. Residues 63-82 (IIWTVLPAIILMFIAFPSLR) traverse the membrane as a helical segment. At 83–228 (LLYLMDEINT…FIKWITSMTN (146 aa)) the chain is on the mitochondrial intermembrane side. Cu cation is bound by residues His161, Cys196, Glu198, Cys200, His204, and Met207. Glu198 contacts Mg(2+).

It belongs to the cytochrome c oxidase subunit 2 family. Component of the cytochrome c oxidase (complex IV, CIV), a multisubunit enzyme composed of a catalytic core of 3 subunits and several supernumerary subunits. The complex exists as a monomer or a dimer and forms supercomplexes (SCs) in the inner mitochondrial membrane with ubiquinol-cytochrome c oxidoreductase (cytochrome b-c1 complex, complex III, CIII). It depends on Cu cation as a cofactor.

Its subcellular location is the mitochondrion inner membrane. It carries out the reaction 4 Fe(II)-[cytochrome c] + O2 + 8 H(+)(in) = 4 Fe(III)-[cytochrome c] + 2 H2O + 4 H(+)(out). Its function is as follows. Component of the cytochrome c oxidase, the last enzyme in the mitochondrial electron transport chain which drives oxidative phosphorylation. The respiratory chain contains 3 multisubunit complexes succinate dehydrogenase (complex II, CII), ubiquinol-cytochrome c oxidoreductase (cytochrome b-c1 complex, complex III, CIII) and cytochrome c oxidase (complex IV, CIV), that cooperate to transfer electrons derived from NADH and succinate to molecular oxygen, creating an electrochemical gradient over the inner membrane that drives transmembrane transport and the ATP synthase. Cytochrome c oxidase is the component of the respiratory chain that catalyzes the reduction of oxygen to water. Electrons originating from reduced cytochrome c in the intermembrane space (IMS) are transferred via the dinuclear copper A center (CU(A)) of subunit 2 and heme A of subunit 1 to the active site in subunit 1, a binuclear center (BNC) formed by heme A3 and copper B (CU(B)). The BNC reduces molecular oxygen to 2 water molecules using 4 electrons from cytochrome c in the IMS and 4 protons from the mitochondrial matrix. This is Cytochrome c oxidase subunit 2 (COII) from Anopheles gambiae (African malaria mosquito).